Consider the following 140-residue polypeptide: Large ribosomal subunit protein uL14 (140 aa).

The protein belongs to the universal ribosomal protein uL14 family. Part of the 50S ribosomal subunit. Forms a cluster with proteins L3 and L24e, part of which may contact the 16S rRNA in 2 intersubunit bridges.

In terms of biological role, binds to 23S rRNA. Forms part of two intersubunit bridges in the 70S ribosome. The protein is Large ribosomal subunit protein uL14 of Nitrosopumilus maritimus (strain SCM1).